The primary structure comprises 938 residues: Isoleucine--tRNA ligase (938 aa).

The 'HIGH' region signature appears at 58–68; that stretch reads PYANGSIHIGH. E561 is a binding site for L-isoleucyl-5'-AMP. The 'KMSKS' region signature appears at 602–606; it reads KMSKS. K605 contributes to the ATP binding site. Residues C901, C904, C921, and C924 each coordinate Zn(2+).

Belongs to the class-I aminoacyl-tRNA synthetase family. IleS type 1 subfamily. As to quaternary structure, monomer. The cofactor is Zn(2+).

It is found in the cytoplasm. The catalysed reaction is tRNA(Ile) + L-isoleucine + ATP = L-isoleucyl-tRNA(Ile) + AMP + diphosphate. In terms of biological role, catalyzes the attachment of isoleucine to tRNA(Ile). As IleRS can inadvertently accommodate and process structurally similar amino acids such as valine, to avoid such errors it has two additional distinct tRNA(Ile)-dependent editing activities. One activity is designated as 'pretransfer' editing and involves the hydrolysis of activated Val-AMP. The other activity is designated 'posttransfer' editing and involves deacylation of mischarged Val-tRNA(Ile). This chain is Isoleucine--tRNA ligase, found in Serratia proteamaculans (strain 568).